The primary structure comprises 101 residues: Gastrin (101 aa).

Residues methionine 1–alanine 21 form the signal peptide. The disordered stretch occupies residues serine 22–glutamate 82. The residue at position 59 (glutamine 59) is a Pyrrolidone carboxylic acid; in form big gastrin. Residue glutamine 76 is modified to Pyrrolidone carboxylic acid; in form gastrin. A Sulfotyrosine; partial modification is found at tyrosine 87. Phenylalanine 92 bears the Phenylalanine amide mark. Position 96 is a phosphoserine (serine 96). Positions serine 96–asparagine 101 are cleaved as a propeptide — removed in mature form.

It belongs to the gastrin/cholecystokinin family. Two different processing pathways probably exist in antral G-cells. In the dominant pathway progastrin is cleaved at three sites resulting in two major bioactive gastrins, gastrin-34 and gastrin-17. In the putative alternative pathway, progastrin may be processed only at the most C-terminal dibasic site resulting in the synthesis of gastrin-71. In terms of processing, sulfation enhances proteolytic processing, and blocks peptide degradation. Levels of sulfation differ between proteolytically-cleaved gastrins. Thus, gastrin-6 is almost 73% sulfated, whereas the larger gastrins are less than 50% sulfated. Sulfation levels are also tissue-specific.

It is found in the secreted. Gastrin stimulates the stomach mucosa to produce and secrete hydrochloric acid and the pancreas to secrete its digestive enzymes. It also stimulates smooth muscle contraction and increases blood circulation and water secretion in the stomach and intestine. This is Gastrin (GAST) from Homo sapiens (Human).